We begin with the raw amino-acid sequence, 267 residues long: Thyroxine 5-deiodinase (267 aa).

Topologically, residues 1-15 are cytoplasmic; sequence MHDSGGVQMARALKH. The chain crosses the membrane as a helical; Signal-anchor for type II membrane protein span at residues 16-36; that stretch reads AALCLMLLPRFLLAAVMLWLL. Topologically, residues 37–267 are extracellular; sequence DFLCIRKKVL…VNSQTAVLHV (231 aa). Selenocysteine 131 is an active-site residue. A non-standard amino acid (selenocysteine) is located at residue selenocysteine 131.

Belongs to the iodothyronine deiodinase family. Monomer. Homodimer. May undergo minor heretodimerization with DIO1 and DIO2.

Its subcellular location is the cell membrane. It localises to the endosome membrane. It catalyses the reaction 3,3',5'-triiodo-L-thyronine + iodide + A + H(+) = L-thyroxine + AH2. It carries out the reaction 3,3'-diiodo-L-thyronine + iodide + A + H(+) = 3,3',5-triiodo-L-thyronine + AH2. The catalysed reaction is 3-iodo-L-thyronine + iodide + A + H(+) = 3,5-diiodo-L-thyronine + AH2. The enzyme catalyses L-thyronine + iodide + A + H(+) = 3-iodo-L-thyronine + AH2. It catalyses the reaction 3',5'-diiodo-L-thyronine + iodide + A + H(+) = 3,3',5'-triiodo-L-thyronine + AH2. It carries out the reaction 3'-iodo-L-thyronine + iodide + A + H(+) = 3,3'-diiodo-L-thyronine + AH2. The catalysed reaction is 3,3',5'-triiodothyronamine + iodide + A + H(+) = 3,3',5,5'-tetraiodothyronamine + AH2. The enzyme catalyses 3',5'-diiodothyronamine + iodide + A + H(+) = 3,3',5'-triiodothyronamine + AH2. It catalyses the reaction 3,3'-diiodothyronamine + iodide + A + H(+) = 3,3',5-triiodothyronamine + AH2. It carries out the reaction 3-iodothyronamine + iodide + A + H(+) = 3,5-diiodothyronamine + AH2. The catalysed reaction is 3'-iodothyronamine + iodide + A + H(+) = 3,3'-diiodothyronamine + AH2. The enzyme catalyses thyronamine + iodide + A + H(+) = 3-iodothyronamine + AH2. Functionally, plays a crucial role in the metabolism of thyroid hormones (TH) and has specific roles in TH activation and inactivation by deiodination. Catalyzes the deiodination of L-thyroxine (T4) to 3,3',5'-triiodothyronine (rT3), 3,5,3'-triiodothyronine (T3) to 3,3'-diiodothyronine (3,3'-T2), 3,5-diiodothyronine (3,5-T2) to 3-monoiodothyronine (3-T1), rT3 to 3',5'-diiodothyronine (3',5'-T2) and 3,3'-T2 to 3'-monoiodothyronine (3'-T1) via inner-ring deiodination (IRD). Catalyzes the deiodination of 3-T1 to L-thyronine (T0) via outer-ring deiodination (ORD). Catalyzes the tyrosyl ring deiodinations of 3,3',5,5'-tetraiodothyronamine, 3,3',5'-triiodothyronamine, 3,5,3'-triiodothyronamine, 3,5-diiodothyronamine, 3,3'-diiodothyronamine and 3-iodothyronamine. The chain is Thyroxine 5-deiodinase (dio3) from Sparus aurata (Gilthead sea bream).